We begin with the raw amino-acid sequence, 122 residues long: Large ribosomal subunit protein uL14 (122 aa).

The protein belongs to the universal ribosomal protein uL14 family. Part of the 50S ribosomal subunit. Forms a cluster with proteins L3 and L19. In the 70S ribosome, L14 and L19 interact and together make contacts with the 16S rRNA in bridges B5 and B8.

Binds to 23S rRNA. Forms part of two intersubunit bridges in the 70S ribosome. The sequence is that of Large ribosomal subunit protein uL14 from Mycobacterium ulcerans (strain Agy99).